The primary structure comprises 379 residues: Tryptophan 2,3-dioxygenase (379 aa).

Substrate contacts are provided by residues 57 to 61 (FIITH) and Arg128. Residue His312 coordinates heme. Thr327 lines the substrate pocket.

Belongs to the tryptophan 2,3-dioxygenase family. In terms of assembly, homotetramer. Dimer of dimers. It depends on heme as a cofactor.

It catalyses the reaction L-tryptophan + O2 = N-formyl-L-kynurenine. Its pathway is amino-acid degradation; L-tryptophan degradation via kynurenine pathway; L-kynurenine from L-tryptophan: step 1/2. It functions in the pathway pigment biosynthesis; ommochrome biosynthesis. In terms of biological role, heme-dependent dioxygenase that catalyzes the oxidative cleavage of the L-tryptophan (L-Trp) pyrrole ring and converts L-tryptophan to N-formyl-L-kynurenine. Catalyzes the oxidative cleavage of the indole moiety. The protein is Tryptophan 2,3-dioxygenase of Drosophila sechellia (Fruit fly).